The sequence spans 89 residues: MANTPSAKKAVRKIERRTEVNRSRRSRVRTYLRKLEDALTAGDATAATAAFQAAEPEIMRAVTKGVLHKNTASRKVSRLAARVKKLSAA.

The protein belongs to the bacterial ribosomal protein bS20 family.

Binds directly to 16S ribosomal RNA. The protein is Small ribosomal subunit protein bS20 of Xanthobacter autotrophicus (strain ATCC BAA-1158 / Py2).